The chain runs to 533 residues: Sterol 26-hydroxylase, mitochondrial (533 aa).

Residues Met-1–Ala-32 constitute a mitochondrion transit peptide. The disordered stretch occupies residues Ile-34–Ala-60. N6-acetyllysine occurs at positions 142, 232, 285, 296, and 375. The sterol-binding stretch occupies residues Pro-386–Pro-400. Cys-479 provides a ligand contact to heme. N6-acetyllysine occurs at positions 512 and 523.

The protein belongs to the cytochrome P450 family. As to quaternary structure, interacts with HSP70; this interaction is required for initial targeting to mitochondria. Heme serves as cofactor. Acetylation of Lys-125 and Lys-285 is observed in liver mitochondria from fasted mice but not from fed mice. As to expression, expressed in the gray and white matter of cerebellum (at protein level).

The protein localises to the mitochondrion inner membrane. It carries out the reaction 5beta-cholestane-3alpha,7alpha,12alpha-triol + 6 reduced [adrenodoxin] + 3 O2 + 5 H(+) = (25R)-3alpha,7alpha,12alpha-trihydroxy-5beta-cholestan-26-oate + 6 oxidized [adrenodoxin] + 4 H2O. The catalysed reaction is cholestanol + 2 reduced [adrenodoxin] + O2 + 2 H(+) = (25R)-26-hydroxycholestanol + 2 oxidized [adrenodoxin] + H2O. It catalyses the reaction (25R)-3beta-hydroxycholest-5-en-7-one-26-al + 2 reduced [adrenodoxin] + O2 + H(+) = (25R)-3beta-hydroxycholest-5-en-7-one-26-oate + 2 oxidized [adrenodoxin] + H2O. The enzyme catalyses (25R)-3beta,26-dihydroxycholest-5-en-7-one + 2 reduced [adrenodoxin] + O2 + 2 H(+) = (25R)-3beta-hydroxycholest-5-en-7-one-26-al + 2 oxidized [adrenodoxin] + 2 H2O. It carries out the reaction 7-oxocholesterol + 2 reduced [adrenodoxin] + O2 + 2 H(+) = (25R)-3beta,26-dihydroxycholest-5-en-7-one + 2 oxidized [adrenodoxin] + H2O. The catalysed reaction is calciol + 2 reduced [adrenodoxin] + O2 + 2 H(+) = calcidiol + 2 oxidized [adrenodoxin] + H2O. It catalyses the reaction (25R)-5beta-cholestane-3alpha,7alpha,12alpha,26-tetrol + 2 reduced [adrenodoxin] + O2 + 2 H(+) = (25R)-3alpha,7alpha,12alpha-trihydroxy-5beta-cholestan-26-al + 2 oxidized [adrenodoxin] + 2 H2O. The enzyme catalyses 2 reduced [adrenodoxin] + cholesterol + O2 + 2 H(+) = (25R)-cholest-5-ene-3beta,26-diol + 2 oxidized [adrenodoxin] + H2O. It carries out the reaction (25R)-3beta,4beta-dihydroxycholest-5-en-26-al + 2 reduced [adrenodoxin] + O2 + H(+) = (25R)-3beta,4beta-dihydroxycholest-5-en-26-oate + 2 oxidized [adrenodoxin] + H2O. The catalysed reaction is (25R)-4beta,26-dihydroxycholesterol + 2 reduced [adrenodoxin] + O2 + 2 H(+) = (25R)-3beta,4beta-dihydroxycholest-5-en-26-al + 2 oxidized [adrenodoxin] + 2 H2O. It catalyses the reaction 4beta-hydroxycholesterol + 2 reduced [adrenodoxin] + O2 + 2 H(+) = (25R)-4beta,26-dihydroxycholesterol + 2 oxidized [adrenodoxin] + H2O. The enzyme catalyses (25R)-3beta-hydroxy-5-cholesten-26-al + 2 reduced [adrenodoxin] + O2 + H(+) = (25R)-3beta-hydroxy-5-cholestenoate + 2 oxidized [adrenodoxin] + H2O. It carries out the reaction (25R)-cholest-5-ene-3beta,26-diol + 2 reduced [adrenodoxin] + O2 + 2 H(+) = (25R)-3beta-hydroxy-5-cholesten-26-al + 2 oxidized [adrenodoxin] + 2 H2O. The catalysed reaction is (25R)-3alpha,7alpha,12alpha-trihydroxy-5beta-cholestan-26-al + 2 reduced [adrenodoxin] + O2 + H(+) = (25R)-3alpha,7alpha,12alpha-trihydroxy-5beta-cholestan-26-oate + 2 oxidized [adrenodoxin] + H2O. It catalyses the reaction 5beta-cholestane-3alpha,7alpha,12alpha-triol + 2 reduced [adrenodoxin] + O2 + 2 H(+) = (25R)-5beta-cholestane-3alpha,7alpha,12alpha,26-tetrol + 2 oxidized [adrenodoxin] + H2O. It participates in hormone biosynthesis; cholecalciferol biosynthesis. Its pathway is steroid metabolism; cholesterol degradation. It functions in the pathway lipid metabolism; bile acid biosynthesis. In terms of biological role, cytochrome P450 monooxygenase that catalyzes regio- and stereospecific hydroxylation of cholesterol and its derivatives. Hydroxylates (with R stereochemistry) the terminal methyl group of cholesterol side-chain in a three step reaction to yield at first a C26 alcohol, then a C26 aldehyde and finally a C26 acid. Regulates cholesterol homeostasis by catalyzing the conversion of excess cholesterol to bile acids via both the 'neutral' (classic) and the 'acid' (alternative) pathways. May also regulate cholesterol homeostasis via generation of active oxysterols, which act as ligands for NR1H2 and NR1H3 nuclear receptors, modulating the transcription of genes involved in lipid metabolism. Plays a role in cholestanol metabolism in the cerebellum. Similarly to cholesterol, hydroxylates cholestanol and may facilitate sterol diffusion through the blood-brain barrier to the systemic circulation for further degradation. Also hydroxylates retinal 7-ketocholesterol, a noxious oxysterol with pro-inflammatory and pro-apoptotic effects, and may play a role in its elimination from the retinal pigment epithelium. May play a redundant role in vitamin D biosynthesis. Catalyzes 25-hydroxylation of vitamin D3 that is required for its conversion to a functionally active form. This is Sterol 26-hydroxylase, mitochondrial from Mus musculus (Mouse).